The sequence spans 77 residues: Large ribosomal subunit protein bL28 (77 aa).

The tract at residues 1–25 (MARVCQVTGKAPMSGNNVSHANNKT) is disordered.

It belongs to the bacterial ribosomal protein bL28 family.

The polypeptide is Large ribosomal subunit protein bL28 (Paraburkholderia phymatum (strain DSM 17167 / CIP 108236 / LMG 21445 / STM815) (Burkholderia phymatum)).